The primary structure comprises 500 residues: Glutamyl-tRNA(Gln) amidotransferase subunit A (500 aa).

Catalysis depends on charge relay system residues lysine 93 and serine 168. Catalysis depends on serine 192, which acts as the Acyl-ester intermediate.

It belongs to the amidase family. GatA subfamily. In terms of assembly, heterotrimer of A, B and C subunits.

The enzyme catalyses L-glutamyl-tRNA(Gln) + L-glutamine + ATP + H2O = L-glutaminyl-tRNA(Gln) + L-glutamate + ADP + phosphate + H(+). Functionally, allows the formation of correctly charged Gln-tRNA(Gln) through the transamidation of misacylated Glu-tRNA(Gln) in organisms which lack glutaminyl-tRNA synthetase. The reaction takes place in the presence of glutamine and ATP through an activated gamma-phospho-Glu-tRNA(Gln). In Corynebacterium jeikeium (strain K411), this protein is Glutamyl-tRNA(Gln) amidotransferase subunit A.